We begin with the raw amino-acid sequence, 122 residues long: Large ribosomal subunit protein uL14c (122 aa).

Belongs to the universal ribosomal protein uL14 family. As to quaternary structure, part of the 50S ribosomal subunit.

Its subcellular location is the plastid. It is found in the chloroplast. In terms of biological role, binds to 23S rRNA. The sequence is that of Large ribosomal subunit protein uL14c from Staurastrum punctulatum (Green alga).